The following is a 356-amino-acid chain: Methionine import ATP-binding protein MetN (356 aa).

Residues 7-250 (IKLDNIDVTF…PRESLTQDFI (244 aa)) form the ABC transporter domain. 43–50 (GYSGAGKS) is a binding site for ATP.

Belongs to the ABC transporter superfamily. Methionine importer (TC 3.A.1.24) family. As to quaternary structure, the complex is composed of two ATP-binding proteins (MetN), two transmembrane proteins (MetI) and a solute-binding protein (MetQ).

It is found in the cell membrane. It carries out the reaction L-methionine(out) + ATP + H2O = L-methionine(in) + ADP + phosphate + H(+). The catalysed reaction is D-methionine(out) + ATP + H2O = D-methionine(in) + ADP + phosphate + H(+). In terms of biological role, part of the ABC transporter complex MetNIQ involved in methionine import. Responsible for energy coupling to the transport system. This is Methionine import ATP-binding protein MetN from Streptococcus agalactiae serotype Ia (strain ATCC 27591 / A909 / CDC SS700).